Reading from the N-terminus, the 220-residue chain is Large ribosomal subunit protein uL16z (220 aa).

This sequence belongs to the universal ribosomal protein uL16 family. As to quaternary structure, component of the small ribosomal subunit. Mature ribosomes consist of a small (40S) and a large (60S) subunit. The 40S subunit contains about 33 different proteins and 1 molecule of RNA (18S). The 60S subunit contains about 49 different proteins and 3 molecules of RNA (25S, 5.8S and 5S). Interacts with NIK1. Interacts with LIMYB. Post-translationally, phosphorylated by NIK1 and NIK2 in vitro. Ubiquitous, with the highest expression in flowers. Expressed in seedlings, leaves, roots, stems and flowers. Expressed in young leaves, mostly in dividing cells and in the hydathodes, in the root tips and lateral root primordia, in pistils, anthers, and pollen grains, and in developing seeds.

Its subcellular location is the cytoplasm. The protein resides in the nucleus. In terms of biological role, ribosomal protein involved in translational regulation. Contribute to general translation under UV-B stress. Involved in the NIK1-mediated defense response to geminivirus infection. Acts coordinately with LIMYB as a transcriptional repressor. The chain is Large ribosomal subunit protein uL16z from Arabidopsis thaliana (Mouse-ear cress).